The primary structure comprises 394 residues: Elongation factor Tu (394 aa).

Residues K10–E204 form the tr-type G domain. Positions G19–T26 are G1. G19–T26 is a GTP binding site. A Mg(2+)-binding site is contributed by T26. A G2 region spans residues G60–N64. A G3 region spans residues D81–G84. Residues D81 to H85 and N136 to D139 each bind GTP. Residues N136–D139 form a G4 region. The segment at S174–L176 is G5.

The protein belongs to the TRAFAC class translation factor GTPase superfamily. Classic translation factor GTPase family. EF-Tu/EF-1A subfamily. Monomer.

The protein localises to the cytoplasm. It catalyses the reaction GTP + H2O = GDP + phosphate + H(+). Functionally, GTP hydrolase that promotes the GTP-dependent binding of aminoacyl-tRNA to the A-site of ribosomes during protein biosynthesis. The protein is Elongation factor Tu of Francisella tularensis subsp. tularensis (strain FSC 198).